The chain runs to 320 residues: L-lactate dehydrogenase 2 (320 aa).

NAD(+) contacts are provided by V16, D37, K42, and Y69. Residue R94 coordinates substrate. NAD(+)-binding positions include S107, 124–126 (VTN), and T149. 126-129 (NPVD) lines the substrate pocket. 154–157 (DTAR) contacts substrate. Beta-D-fructose 1,6-bisphosphate-binding residues include R159 and H174. H181 functions as the Proton acceptor in the catalytic mechanism. T235 lines the substrate pocket.

The protein belongs to the LDH/MDH superfamily. LDH family. As to quaternary structure, homotetramer.

It is found in the cytoplasm. The enzyme catalyses (S)-lactate + NAD(+) = pyruvate + NADH + H(+). It participates in fermentation; pyruvate fermentation to lactate; (S)-lactate from pyruvate: step 1/1. Allosterically activated by fructose 1,6-bisphosphate (FBP). Its function is as follows. Catalyzes the conversion of lactate to pyruvate. The chain is L-lactate dehydrogenase 2 from Clostridium acetobutylicum (strain ATCC 824 / DSM 792 / JCM 1419 / IAM 19013 / LMG 5710 / NBRC 13948 / NRRL B-527 / VKM B-1787 / 2291 / W).